The chain runs to 271 residues: Low choriolytic enzyme (271 aa).

The signal sequence occupies residues 1-20 (MDLLAKASVLLLLLLSLSNA). The propeptide at 21 to 71 (QTDNMEEAENGSSKEEIDESELEDVSSIIFRMNNNSMEELLEGDLVLPKTR) is activation peptide. N-linked (GlcNAc...) asparagine glycosylation is found at N30 and N54. A Peptidase M12A domain is found at 72-271 (NAMKCFGAPD…ILRVNKLYKC (200 aa)). Cystine bridges form between C76–C83, C123–C271, and C144–C164. H172 lines the Zn(2+) pocket. Residue E173 is part of the active site. Residues H176 and H182 each contribute to the Zn(2+) site. N-linked (GlcNAc...) asparagine glycosylation is present at N211.

Zn(2+) is required as a cofactor.

The protein resides in the zymogen granule. It carries out the reaction Hydrolysis of the inner layer of fish egg envelope. Also hydrolysis of casein and small molecule substrates such as succinyl-Leu-Leu-Val-Tyr-|-7-(4-methyl)coumarylamide.. Participates in the breakdown of the egg envelope, which is derived from the egg extracellular matrix, at the time of hatching. Thus allowing the newly hatched fish to swim free. LCE solubilizes the egg envelope only after it has been swollen by the action of HCE. The chain is Low choriolytic enzyme (lce) from Oryzias latipes (Japanese rice fish).